A 261-amino-acid polypeptide reads, in one-letter code: Carnitinyl-CoA dehydratase (261 aa).

E111 (nucleophile) is an active-site residue. Residue E131 is the Proton acceptor of the active site.

This sequence belongs to the enoyl-CoA hydratase/isomerase family.

The catalysed reaction is (R)-carnitinyl-CoA = crotonobetainyl-CoA + H2O. The protein operates within amine and polyamine metabolism; carnitine metabolism. Functionally, catalyzes the reversible dehydration of L-carnitinyl-CoA to crotonobetainyl-CoA. The protein is Carnitinyl-CoA dehydratase of Escherichia coli (strain SMS-3-5 / SECEC).